A 405-amino-acid chain; its full sequence is Tyrosine--tRNA ligase (405 aa).

The 'HIGH' region signature appears at 46 to 55; sequence PTRPDIHLGH. A 'KMSKS' region motif is present at residues 230–234; that stretch reads KMSKS. Lys233 contacts ATP. The 64-residue stretch at 341–404 folds into the S4 RNA-binding domain; that stretch reads MGLAALMVKA…GKKKFVKIVV (64 aa).

Belongs to the class-I aminoacyl-tRNA synthetase family. TyrS type 2 subfamily. Homodimer.

It localises to the cytoplasm. It catalyses the reaction tRNA(Tyr) + L-tyrosine + ATP = L-tyrosyl-tRNA(Tyr) + AMP + diphosphate + H(+). Its function is as follows. Catalyzes the attachment of tyrosine to tRNA(Tyr) in a two-step reaction: tyrosine is first activated by ATP to form Tyr-AMP and then transferred to the acceptor end of tRNA(Tyr). The sequence is that of Tyrosine--tRNA ligase from Bdellovibrio bacteriovorus (strain ATCC 15356 / DSM 50701 / NCIMB 9529 / HD100).